We begin with the raw amino-acid sequence, 338 residues long: Putative acyl-[acyl-carrier-protein] desaturase DesA1 (338 aa).

Fe cation contacts are provided by glutamate 76, glutamate 107, histidine 110, glutamate 167, glutamate 197, and histidine 200. Residues 314–328 (EARTGKKVSAHELHK) are compositionally biased toward basic and acidic residues. The tract at residues 314 to 338 (EARTGKKVSAHELHKTAGKLAMSRR) is disordered.

This sequence belongs to the fatty acid desaturase type 2 family. In terms of assembly, homodimer. Fe(2+) is required as a cofactor.

It is found in the cell surface. Its pathway is lipid metabolism; fatty acid metabolism. Its function is as follows. May be a desaturase involved in mycobacterial fatty acid biosynthesis. This Mycobacterium tuberculosis (strain CDC 1551 / Oshkosh) protein is Putative acyl-[acyl-carrier-protein] desaturase DesA1 (desA1).